A 378-amino-acid chain; its full sequence is Opsin Rh4 (378 aa).

Residues 1-53 (MEPLCNASEPPLRPEARSSGNGDLQFLGWNVPPDQIQYIPEHWLTQLEPPASM) are Extracellular-facing. The N-linked (GlcNAc...) asparagine glycan is linked to asparagine 6. Residues 54–78 (HYMLGVFYIFLFCASTVGNGMVIWI) form a helical membrane-spanning segment. Topologically, residues 79 to 90 (FSTSKSLRTPSN) are cytoplasmic. Residues 91–111 (MFVLNLAVFDLIMCLKAPIFI) form a helical membrane-spanning segment. The Extracellular portion of the chain corresponds to 112–127 (YNSFHRGFALGNTWCQ). Cysteine 126 and cysteine 203 are joined by a disulfide. Residues 128-148 (IFASIGSYSGIGAGMTNAAIG) form a helical membrane-spanning segment. The Cytoplasmic segment spans residues 149–167 (YDRYNVITKPMNRNMTFTK). Residues 168–192 (AVIMNIIIWLYCTPWVVLPLTQFWD) traverse the membrane as a helical segment. At 193–216 (RFVPEGYLTSCSFDYLSDNFDTRL) the chain is on the extracellular side. A helical membrane pass occupies residues 217–244 (FVGTIFFFSFVCPTLMILYYYSQIVGHV). At 245–280 (FSHEKALREQAKKMNVESLRSNVDKSKETAEIRIAK) the chain is on the cytoplasmic side. Residues 281-304 (AAITICFLFFVSWTPYGVMSLIGA) traverse the membrane as a helical segment. Over 305-312 (FGDKSLLT) the chain is Extracellular. A helical transmembrane segment spans residues 313–337 (PGATMIPACTCKLVACIDPFVYAIS). Lysine 324 bears the N6-(retinylidene)lysine mark. Residues 338-378 (HPRYRLELQKRCPWLGVNEKSGEISSAQSTTTQEQQQTTAA) lie on the Cytoplasmic side of the membrane.

Belongs to the G-protein coupled receptor 1 family. Opsin subfamily. Post-translationally, phosphorylated on some or all of the serine and threonine residues present in the C-terminal region.

Its subcellular location is the membrane. In terms of biological role, visual pigments are the light-absorbing molecules that mediate vision. They consist of an apoprotein, opsin, covalently linked to cis-retinal. The polypeptide is Opsin Rh4 (Rh4) (Drosophila melanogaster (Fruit fly)).